The sequence spans 510 residues: Archaeal glutamate synthase [NADPH] (510 aa).

2 4Fe-4S ferredoxin-type domains span residues 10 to 37 (YKVE…YRRE) and 38 to 68 (GDRI…IKEN). Cys19, Cys22, Cys25, Cys29, Cys48, Cys51, Cys54, and Cys58 together coordinate [4Fe-4S] cluster.

The protein belongs to the glutamate synthase family. FMN serves as cofactor.

It carries out the reaction 2 L-glutamate + NADP(+) = L-glutamine + 2-oxoglutarate + NADPH + H(+). This chain is Archaeal glutamate synthase [NADPH], found in Methanocaldococcus jannaschii (strain ATCC 43067 / DSM 2661 / JAL-1 / JCM 10045 / NBRC 100440) (Methanococcus jannaschii).